A 225-amino-acid chain; its full sequence is Biosynthetic peptidoglycan transglycosylase (225 aa).

A helical membrane pass occupies residues 7-27; that stretch reads SFLFKMVLILLIAPIVLVGVV.

This sequence belongs to the glycosyltransferase 51 family.

It is found in the cell inner membrane. The enzyme catalyses [GlcNAc-(1-&gt;4)-Mur2Ac(oyl-L-Ala-gamma-D-Glu-L-Lys-D-Ala-D-Ala)](n)-di-trans,octa-cis-undecaprenyl diphosphate + beta-D-GlcNAc-(1-&gt;4)-Mur2Ac(oyl-L-Ala-gamma-D-Glu-L-Lys-D-Ala-D-Ala)-di-trans,octa-cis-undecaprenyl diphosphate = [GlcNAc-(1-&gt;4)-Mur2Ac(oyl-L-Ala-gamma-D-Glu-L-Lys-D-Ala-D-Ala)](n+1)-di-trans,octa-cis-undecaprenyl diphosphate + di-trans,octa-cis-undecaprenyl diphosphate + H(+). The protein operates within cell wall biogenesis; peptidoglycan biosynthesis. Functionally, peptidoglycan polymerase that catalyzes glycan chain elongation from lipid-linked precursors. The protein is Biosynthetic peptidoglycan transglycosylase of Vibrio parahaemolyticus serotype O3:K6 (strain RIMD 2210633).